Here is a 565-residue protein sequence, read N- to C-terminus: Inositol-3-phosphate synthase (565 aa).

Residues Gly70, Gly71, Asn72, Asn73, Asp144, Ser180, Ile181, Gln191, Arg194, Thr231, Ala232, Asn233, Thr234, Gly282, Ser283, Asp307, Ser310, Asn341, Asn342, Asp343, Lys356, Gly394, Asp395, Asp423, and Ser424 each contribute to the NAD(+) site. Ser536 is modified (phosphoserine). Residues Leu546–His565 form a disordered region. Positions Gly550–His565 are enriched in polar residues.

It belongs to the myo-inositol 1-phosphate synthase family. The cofactor is NAD(+). As to expression, higher expression in adult heads than bodies.

Its subcellular location is the cytoplasm. It catalyses the reaction D-glucose 6-phosphate = 1D-myo-inositol 3-phosphate. Its pathway is polyol metabolism; myo-inositol biosynthesis; myo-inositol from D-glucose 6-phosphate: step 1/2. In terms of biological role, key enzyme in myo-inositol biosynthesis pathway that catalyzes the conversion of glucose 6-phosphate to 1-myo-inositol 1-phosphate in a NAD-dependent manner. Rate-limiting enzyme in the synthesis of all inositol-containing compounds. The polypeptide is Inositol-3-phosphate synthase (Inos) (Drosophila melanogaster (Fruit fly)).